An 892-amino-acid chain; its full sequence is Protein FAM193B (892 aa).

Disordered regions lie at residues Met1–Gln78, Ser164–Asp192, Glu237–Lys321, and Asp379–Arg403. Positions Ala28–Ser37 are enriched in pro residues. A compositionally biased stretch (basic and acidic residues) spans Asp56–Lys65. The segment covering Ser169–Ser185 has biased composition (low complexity). 3 stretches are compositionally biased toward pro residues: residues Pro248–Pro258, Tyr274–Pro285, and Ser309–Lys321. A compositionally biased stretch (acidic residues) spans Asp379–Ser388. The segment covering Glu391–Thr400 has biased composition (low complexity). The stretch at Asn485–Arg517 forms a coiled coil. Polar residues-rich tracts occupy residues Leu587–Gln597 and Thr610–Ala621. Disordered regions lie at residues Leu587–Leu655 and Val671–Asp837. Residues Pro637 to Ile650 are compositionally biased toward pro residues. The span at Lys736–Gly757 shows a compositional bias: low complexity. A phosphoserine mark is found at Ser764, Ser776, and Ser882.

It belongs to the FAM193 family.

It is found in the cytoplasm. The protein localises to the nucleus. The polypeptide is Protein FAM193B (Fam193b) (Mus musculus (Mouse)).